Reading from the N-terminus, the 220-residue chain is MTRRELARMIDHTLLKPDATEAQIRQLCAEGREHGFMSVCVNPYWVPLCAELLSGTEVKVCTTIGFPLGANRSEIKAVEAEDAVARGAREVDMVINVGALKSGRRDVVLNDIRAVVSAVAGEALVKVIIETGLLTDEEKVIACQLAQEAGADFVKTSTGFGTGGATVHDIALMRRTVGAGMGVKASGGVRDLETALAMIGAGANRIGASAGVAILAGLEA.

D92 (proton donor/acceptor) is an active-site residue. Residue K155 is the Schiff-base intermediate with acetaldehyde of the active site. K184 serves as the catalytic Proton donor/acceptor.

The protein belongs to the DeoC/FbaB aldolase family. DeoC type 1 subfamily.

It localises to the cytoplasm. The catalysed reaction is 2-deoxy-D-ribose 5-phosphate = D-glyceraldehyde 3-phosphate + acetaldehyde. It participates in carbohydrate degradation; 2-deoxy-D-ribose 1-phosphate degradation; D-glyceraldehyde 3-phosphate and acetaldehyde from 2-deoxy-alpha-D-ribose 1-phosphate: step 2/2. In terms of biological role, catalyzes a reversible aldol reaction between acetaldehyde and D-glyceraldehyde 3-phosphate to generate 2-deoxy-D-ribose 5-phosphate. This Symbiobacterium thermophilum (strain DSM 24528 / JCM 14929 / IAM 14863 / T) protein is Deoxyribose-phosphate aldolase.